The sequence spans 839 residues: Taste receptor type 1 member 2 (839 aa).

Positions 1–19 (MRPRATTICSLFFLLRVLA) are cleaved as a signal peptide. Over 20–566 (EPAKNSDFYL…AFLEWHEAPT (547 aa)) the chain is Extracellular. N84, N127, N248, N292, N312, N368, N428, N487, and N527 each carry an N-linked (GlcNAc...) asparagine glycan. A helical membrane pass occupies residues 567 to 587 (IVVALLAALGFLSTLAILVIF). Residues 588–602 (WRHFQTPMVRSAGGP) lie on the Cytoplasmic side of the membrane. A helical membrane pass occupies residues 603 to 623 (MCFLMLTLLLVAYMVVPVYVG). Residues 624–635 (PPKVSTCFCRQA) lie on the Extracellular side of the membrane. Residues 636-656 (LFPLCFTICISCIAVRSFQIV) traverse the membrane as a helical segment. The Cytoplasmic segment spans residues 657–681 (CVFKMASRFPRAYSYWVRYQGPYVS). The helical transmembrane segment at 682 to 702 (MAFITVLKMVTVVIGMLATGL) threads the bilayer. The Extracellular segment spans residues 703-727 (NPTTRIDPDDPKIMIVSCNPNYRNS). The chain crosses the membrane as a helical span at residues 728-748 (LFFNTGLDLLLSVVGFSFAYM). At 749 to 760 (GKELPTNYNEAK) the chain is on the cytoplasmic side. Residues 761–781 (FITLSMTFYFTSSVSLCTFMS) traverse the membrane as a helical segment. The Extracellular segment spans residues 782-784 (AYN). Residues 785–805 (GVLVTIMDLLVTVLNLLAISL) form a helical membrane-spanning segment. Over 806 to 839 (GYFGPKCYMILFYPERNTPAYFNSMIQGYTMRRD) the chain is Cytoplasmic.

It belongs to the G-protein coupled receptor 3 family. TAS1R subfamily. As to quaternary structure, forms heterodimers with TAS1R3.

The protein localises to the cell membrane. Its function is as follows. Putative taste receptor. TAS1R2/TAS1R3 recognizes diverse natural and synthetic sweeteners. This Papio hamadryas (Hamadryas baboon) protein is Taste receptor type 1 member 2 (TAS1R2).